Consider the following 147-residue polypeptide: uncharacterized protein (147 aa).

Positions 44–147 constitute an HTH LytTR-type domain; the sequence is LVGYIDKEIH…LKSIKERLSI (104 aa).

The protein localises to the cytoplasm. This is an uncharacterized protein from Staphylococcus aureus (strain MW2).